Here is a 333-residue protein sequence, read N- to C-terminus: Chlorophyllide reductase 35.5 kDa chain (333 aa).

The span at 1-17 (MTDAPELKAFDQRLRDE) shows a compositional bias: basic and acidic residues. A disordered region spans residues 1–30 (MTDAPELKAFDQRLRDEAAEEPTLEVPQGE). Residues 45 to 50 (GIGKSF) and Lys74 contribute to the ATP site. Mg(2+) is bound at residue Ser49. [4Fe-4S] cluster contacts are provided by Cys130 and Cys165. 219–220 (NK) provides a ligand contact to ATP.

Belongs to the NifH/BchL/ChlL family. In terms of assembly, homodimer. Chlorophyllide reductase is composed of three subunits; BchX, BchY and BchZ. [4Fe-4S] cluster is required as a cofactor.

It carries out the reaction 3-deacetyl-3-vinylbacteriochlorophyllide a + 2 oxidized [2Fe-2S]-[ferredoxin] + ADP + phosphate = chlorophyllide a + 2 reduced [2Fe-2S]-[ferredoxin] + ATP + H2O + H(+). The enzyme catalyses bacteriochlorophyllide a + 2 oxidized [2Fe-2S]-[ferredoxin] + ADP + phosphate = 3-acetyl-3-devinylchlorophyllide a + 2 reduced [2Fe-2S]-[ferredoxin] + ATP + H2O + H(+). The catalysed reaction is 3-deacetyl-3-(1-hydroxyethyl)bacteriochlorophyllide a + 2 oxidized [2Fe-2S]-[ferredoxin] + ADP + phosphate = 3-devinyl-3-(1-hydroxyethyl)chlorophyllide a + 2 reduced [2Fe-2S]-[ferredoxin] + ATP + H2O + H(+). Its pathway is porphyrin-containing compound metabolism; bacteriochlorophyll biosynthesis. Functionally, converts chlorophylls (Chl) into bacteriochlorophylls (BChl) by reducing ring B of the tetrapyrrole. This is Chlorophyllide reductase 35.5 kDa chain (bchX) from Cereibacter sphaeroides (strain ATCC 17023 / DSM 158 / JCM 6121 / CCUG 31486 / LMG 2827 / NBRC 12203 / NCIMB 8253 / ATH 2.4.1.) (Rhodobacter sphaeroides).